A 1371-amino-acid polypeptide reads, in one-letter code: DNA-directed RNA polymerase subunit beta' (1371 aa).

Positions 71, 73, 86, and 89 each coordinate Zn(2+). The Mg(2+) site is built by Asp461, Asp463, and Asp465. Residues Cys803, Cys877, Cys884, and Cys887 each contribute to the Zn(2+) site.

This sequence belongs to the RNA polymerase beta' chain family. The RNAP catalytic core consists of 2 alpha, 1 beta, 1 beta' and 1 omega subunit. When a sigma factor is associated with the core the holoenzyme is formed, which can initiate transcription. Mg(2+) serves as cofactor. Zn(2+) is required as a cofactor.

It carries out the reaction RNA(n) + a ribonucleoside 5'-triphosphate = RNA(n+1) + diphosphate. Functionally, DNA-dependent RNA polymerase catalyzes the transcription of DNA into RNA using the four ribonucleoside triphosphates as substrates. The chain is DNA-directed RNA polymerase subunit beta' from Thermodesulfovibrio yellowstonii (strain ATCC 51303 / DSM 11347 / YP87).